We begin with the raw amino-acid sequence, 353 residues long: ATPase GET3A (353 aa).

ATP is bound at residue 27 to 34 (KGGVGKTT). D56 is an active-site residue. Positions 226 and 253 each coordinate ATP. A coiled-coil region spans residues 320–353 (TTSRSNVEELERKVHTLRLQLKTAEEELERVKSG).

It belongs to the arsA ATPase family. Homodimer. Interacts with GET1 and GET4.

The protein resides in the cytoplasm. Its subcellular location is the cytosol. It is found in the endoplasmic reticulum. The catalysed reaction is ATP + H2O = ADP + phosphate + H(+). ATPase required for the post-translational delivery of tail-anchored (TA) proteins to the endoplasmic reticulum. Recognizes and selectively binds the transmembrane domain of TA proteins in the cytosol. This complex then targets to the endoplasmic reticulum by membrane-bound receptors, where the tail-anchored protein is released for insertion. This process is regulated by ATP binding and hydrolysis. ATP binding drives the homodimer towards the closed dimer state, facilitating recognition of newly synthesized TA membrane proteins. ATP hydrolysis is required for insertion. Subsequently, the homodimer reverts towards the open dimer state, lowering its affinity for the membrane-bound receptor, and returning it to the cytosol to initiate a new round of targeting. Involved in the control of root hair growth through the regulation of syntaxin SYP123 expression. This Arabidopsis thaliana (Mouse-ear cress) protein is ATPase GET3A.